The following is a 679-amino-acid chain: MGLFNAHAVAQQRADRIATLLQSFADGQLDTAVGEAPAPGYERLYDSLRALQRQLREQRAELQQVESLEAGLAEMSRQHEAGWIDQTIPAERLEGRAARIAKGVNELVAAHIAVKMKVVSVVTAYGQGNFEPLMDRLPGKKAQITEAIDGVRERLRGAAEATSAQLATAAYNARIKSALDNVSANVMIADNDLNIIYMNRTVSEMLGRAEADIRKQLPNFDAGRLMGANIDVFHKNPAHQRHLLANLTGVHKAELNLGGRRFSLDVVPVFNDANERLGSAVQWTDRTEEHRAEQEVSQLVQAAAAGDFSKRVEEAGKEGFFLRLAKDLNSLVDTADRGLRDVSRMLGALAQGDLTQRIEADYQGTFGQLKDFSNDTAQSLSRMLGQIREAADTINTAASEIASGNAELSARTEQQASSLEETASSMEELTSTVKLNAENARQANSLAANASEVATQGGTVVQKVVSTMSSINESARKIADIIGVIDGIAFQTNILALNAAVEAARAGEQGRGFAVVAGEVRTLAQRSAAAAKEIKTLISDSVDKVENGNTLVAQAGQTMSDIVVAIRRVTDIMSEIAAASAEQSTGIEEVNSAVSQMDDMTQQNAALVEEAAAAAEAMQEQAGLLNQSVAVFRLDTPPSVVQLASARPSAPRPSAPAPLARSGMARASKARKEDGWEEF.

3 divergent domain HAMP regions span residues 8–56 (AVAQ…RQLR), 63–112 (QQVE…AAHI), and 111–156 (HIAV…ERLR). A PAS domain is found at 171-213 (YNARIKSALDNVSANVMIADNDLNIIYMNRTVSEMLGRAEADI). H234 is a binding site for heme. Residues 285 to 287 (DRT) carry the DxT. Important for signal propagation motif. The segment at 289 to 332 (EHRAEQEVSQLVQAAAAGDFSKRVEEAGKEGFFLRLAKDLNSLV) is divergent domain HAMP 4. An HAMP 5 domain is found at 333–385 (DTADRGLRDVSRMLGALAQGDLTQRIEADYQGTFGQLKDFSNDTAQSLSRMLG). The region spanning 390–619 (AADTINTAAS…EAAAAAEAMQ (230 aa)) is the Methyl-accepting transducer domain. Disordered stretches follow at residues 405–425 (NAELSARTEQQASSLEETASS) and 644–679 (ASARPSAPRPSAPAPLARSGMARASKARKEDGWEEF). The span at 411–425 (RTEQQASSLEETASS) shows a compositional bias: polar residues. Positions 670-679 (ARKEDGWEEF) are enriched in basic and acidic residues. The short motif at 675 to 679 (GWEEF) is the GWEEF pentapeptide. Important for methylation by CheR2 element.

The protein belongs to the methyl-accepting chemotaxis (MCP) protein family. Homodimer. The PAS domains form dimers in the presence and absence of oxygen. Interacts with the methyltransferase CheR2 via the C-terminal McpB pentapeptide GWEEF. Interacts with the methylesterase/gutaminase CheB2, which also binds to the GWEEF pentapeptide. In terms of processing, methylated by CheR2, but not by CheR1, CheR3 or WspC. Demethylated by CheB2. In vitro, can be methylated by E.coli CheR.

It is found in the cytoplasm. In terms of biological role, chemoreceptor that plays a critical role in the virulence and pathogenesis of P.aeruginosa in a variety of hosts. Probably acts through oxygen sensing. Uses a heme-based sensor. Could be involved in chemotaxis. When expressed in E.coli, is able to sense and mediate repellent responses to oxygen, carbon monoxide and nitric oxide. The polypeptide is Methyl-accepting chemotaxis protein McpB (Pseudomonas aeruginosa (strain ATCC 15692 / DSM 22644 / CIP 104116 / JCM 14847 / LMG 12228 / 1C / PRS 101 / PAO1)).